A 461-amino-acid chain; its full sequence is Argininosuccinate lyase (461 aa).

Belongs to the lyase 1 family. Argininosuccinate lyase subfamily.

The protein resides in the cytoplasm. It carries out the reaction 2-(N(omega)-L-arginino)succinate = fumarate + L-arginine. It functions in the pathway amino-acid biosynthesis; L-arginine biosynthesis; L-arginine from L-ornithine and carbamoyl phosphate: step 3/3. This is Argininosuccinate lyase from Shewanella piezotolerans (strain WP3 / JCM 13877).